The following is a 460-amino-acid chain: Bifunctional protein GlmU (460 aa).

The tract at residues 1-229 (MTNYAIILAA…FNESLGVNDR (229 aa)) is pyrophosphorylase. Residues 8-11 (LAAG), Lys22, Gln72, and 77-78 (GT) each bind UDP-N-acetyl-alpha-D-glucosamine. Residue Asp102 coordinates Mg(2+). Positions 139, 154, 169, and 227 each coordinate UDP-N-acetyl-alpha-D-glucosamine. Residue Asn227 participates in Mg(2+) binding. The interval 230–250 (VALATAETVMRQRITQKHMVN) is linker. The segment at 251–460 (GVTFQNPETV…RLAHHPSRSK (210 aa)) is N-acetyltransferase. Positions 332 and 350 each coordinate UDP-N-acetyl-alpha-D-glucosamine. Residue His362 is the Proton acceptor of the active site. 2 residues coordinate UDP-N-acetyl-alpha-D-glucosamine: Tyr365 and Asn376. Acetyl-CoA contacts are provided by residues Ala379, 385 to 386 (NY), Ser404, Ala422, and Arg439.

This sequence in the N-terminal section; belongs to the N-acetylglucosamine-1-phosphate uridyltransferase family. The protein in the C-terminal section; belongs to the transferase hexapeptide repeat family. In terms of assembly, homotrimer. The cofactor is Mg(2+).

Its subcellular location is the cytoplasm. It carries out the reaction alpha-D-glucosamine 1-phosphate + acetyl-CoA = N-acetyl-alpha-D-glucosamine 1-phosphate + CoA + H(+). The enzyme catalyses N-acetyl-alpha-D-glucosamine 1-phosphate + UTP + H(+) = UDP-N-acetyl-alpha-D-glucosamine + diphosphate. It participates in nucleotide-sugar biosynthesis; UDP-N-acetyl-alpha-D-glucosamine biosynthesis; N-acetyl-alpha-D-glucosamine 1-phosphate from alpha-D-glucosamine 6-phosphate (route II): step 2/2. It functions in the pathway nucleotide-sugar biosynthesis; UDP-N-acetyl-alpha-D-glucosamine biosynthesis; UDP-N-acetyl-alpha-D-glucosamine from N-acetyl-alpha-D-glucosamine 1-phosphate: step 1/1. Its pathway is bacterial outer membrane biogenesis; LPS lipid A biosynthesis. Catalyzes the last two sequential reactions in the de novo biosynthetic pathway for UDP-N-acetylglucosamine (UDP-GlcNAc). The C-terminal domain catalyzes the transfer of acetyl group from acetyl coenzyme A to glucosamine-1-phosphate (GlcN-1-P) to produce N-acetylglucosamine-1-phosphate (GlcNAc-1-P), which is converted into UDP-GlcNAc by the transfer of uridine 5-monophosphate (from uridine 5-triphosphate), a reaction catalyzed by the N-terminal domain. The polypeptide is Bifunctional protein GlmU (Streptococcus pyogenes serotype M6 (strain ATCC BAA-946 / MGAS10394)).